A 272-amino-acid polypeptide reads, in one-letter code: Ribonuclease HII (272 aa).

In terms of domain architecture, RNase H type-2 spans 87–272 (KYVAGVDEVG…HRMSFLKNIL (186 aa)). Positions 93, 94, and 188 each coordinate a divalent metal cation.

This sequence belongs to the RNase HII family. Mn(2+) is required as a cofactor. The cofactor is Mg(2+).

It localises to the cytoplasm. It catalyses the reaction Endonucleolytic cleavage to 5'-phosphomonoester.. In terms of biological role, endonuclease that specifically degrades the RNA of RNA-DNA hybrids. This chain is Ribonuclease HII, found in Clostridium perfringens (strain ATCC 13124 / DSM 756 / JCM 1290 / NCIMB 6125 / NCTC 8237 / Type A).